A 53-amino-acid chain; its full sequence is U13-myrmicitoxin-Tb1a (53 aa).

The signal sequence occupies residues 1–23; it reads MKLIYIFSLVAVIAVTMIPGIMG. Positions 24–29 are excised as a propeptide; it reads EAEAEG. Lys52 carries the post-translational modification Lysine amide.

As to expression, expressed by the venom gland.

Its subcellular location is the secreted. In terms of biological role, in vivo, this neurotoxin paralyzes about 70% of blowflies (L.caesar) one hour after intrathoracic injection, when tested at high doses (45 nmol/g). The polypeptide is U13-myrmicitoxin-Tb1a (Tetramorium bicarinatum (Tramp ant)).